The sequence spans 59 residues: Large ribosomal subunit protein uL30 (59 aa).

It belongs to the universal ribosomal protein uL30 family. In terms of assembly, part of the 50S ribosomal subunit.

The polypeptide is Large ribosomal subunit protein uL30 (Clostridium botulinum (strain Alaska E43 / Type E3)).